Reading from the N-terminus, the 336-residue chain is Formimidoylglutamase (336 aa).

6 residues coordinate Mn(2+): His-129, Asp-160, His-162, Asp-164, Asp-257, and Asp-259.

The protein belongs to the arginase family. The cofactor is Mn(2+).

It carries out the reaction N-formimidoyl-L-glutamate + H2O = formamide + L-glutamate. Its pathway is amino-acid degradation; L-histidine degradation into L-glutamate; L-glutamate from N-formimidoyl-L-glutamate (hydrolase route): step 1/1. In terms of biological role, catalyzes the conversion of N-formimidoyl-L-glutamate to L-glutamate and formamide. This chain is Formimidoylglutamase, found in Vibrio vulnificus (strain YJ016).